We begin with the raw amino-acid sequence, 100 residues long: Replication restart protein PriB (100 aa).

Residues 1–100 (MTNRMELSGT…VLHADDIIHI (100 aa)) enclose the SSB domain.

Belongs to the PriB family. Homodimer. Interacts with PriA and DnaT. Component of the replication restart primosome. Primosome assembly occurs via a 'hand-off' mechanism. PriA binds to replication forks, subsequently PriB then DnaT bind; DnaT then displaces ssDNA to generate the helicase loading substrate.

Functionally, involved in the restart of stalled replication forks, which reloads the replicative helicase on sites other than the origin of replication; the PriA-PriB pathway is the major replication restart pathway. During primosome assembly it facilitates complex formation between PriA and DnaT on DNA; stabilizes PriA on DNA. Stimulates the DNA unwinding activity of PriA helicase. This Vibrio vulnificus (strain CMCP6) protein is Replication restart protein PriB.